The chain runs to 222 residues: Ribonuclease T (222 aa).

The Exonuclease domain occupies 20–194 (VVIDVETAGF…YDTERTAELF (175 aa)). Residues D23, E25, H181, and D186 each coordinate Mg(2+). The active-site Proton donor/acceptor is the H181.

This sequence belongs to the RNase T family. Homodimer. Mg(2+) serves as cofactor.

Its function is as follows. Trims short 3' overhangs of a variety of RNA species, leaving a one or two nucleotide 3' overhang. Responsible for the end-turnover of tRNA: specifically removes the terminal AMP residue from uncharged tRNA (tRNA-C-C-A). Also appears to be involved in tRNA biosynthesis. The polypeptide is Ribonuclease T (Shewanella sp. (strain ANA-3)).